The sequence spans 174 residues: Methionine-R-sulfoxide reductase B2, mitochondrial (174 aa).

Residues 1–61 (MARLLRALRG…PEQFYVTREK (61 aa)) constitute a mitochondrion transit peptide. A MsrB domain is found at 62 to 172 (GTEAPFSGMY…NSVALKFKPS (111 aa)). Cys-82, Cys-85, Cys-138, and Cys-141 together coordinate Zn(2+). The active-site Nucleophile is the Cys-161.

Belongs to the MsrB Met sulfoxide reductase family. Zn(2+) is required as a cofactor.

It is found in the mitochondrion. It carries out the reaction L-methionyl-[protein] + [thioredoxin]-disulfide + H2O = L-methionyl-(R)-S-oxide-[protein] + [thioredoxin]-dithiol. It catalyses the reaction [thioredoxin]-disulfide + L-methionine + H2O = L-methionine (R)-S-oxide + [thioredoxin]-dithiol. Functionally, methionine-sulfoxide reductase that specifically reduces methionine (R)-sulfoxide back to methionine. While in many cases, methionine oxidation is the result of random oxidation following oxidative stress, methionine oxidation is also a post-translational modification that takes place on specific residue. Upon oxidative stress, may play a role in the preservation of mitochondrial integrity by decreasing the intracellular reactive oxygen species build-up through its scavenging role, hence contributing to cell survival and protein maintenance. The protein is Methionine-R-sulfoxide reductase B2, mitochondrial (Msrb2) of Rattus norvegicus (Rat).